Consider the following 220-residue polypeptide: Deoxyribose-phosphate aldolase (220 aa).

Aspartate 89 (proton donor/acceptor) is an active-site residue. The active-site Schiff-base intermediate with acetaldehyde is lysine 152. Lysine 181 acts as the Proton donor/acceptor in catalysis.

Belongs to the DeoC/FbaB aldolase family. DeoC type 1 subfamily.

The protein localises to the cytoplasm. The enzyme catalyses 2-deoxy-D-ribose 5-phosphate = D-glyceraldehyde 3-phosphate + acetaldehyde. The protein operates within carbohydrate degradation; 2-deoxy-D-ribose 1-phosphate degradation; D-glyceraldehyde 3-phosphate and acetaldehyde from 2-deoxy-alpha-D-ribose 1-phosphate: step 2/2. In terms of biological role, catalyzes a reversible aldol reaction between acetaldehyde and D-glyceraldehyde 3-phosphate to generate 2-deoxy-D-ribose 5-phosphate. This chain is Deoxyribose-phosphate aldolase, found in Enterococcus faecalis (strain ATCC 700802 / V583).